The sequence spans 278 residues: Heat stress transcription factor C-2b (278 aa).

A compositionally biased stretch (gly residues) spans 105–114 (AAGGGGGGGG). The disordered stretch occupies residues 105–132 (AAGGGGGGGGGKRRDASADGGGGGGDED). The tract at residues 143–179 (LKQEQRTIDDRVAAMWRRVQETERRPKQMLAFLLKVV) is hydrophobic repeat HR-A/B. The Nuclear localization signal signature appears at 219–222 (KRAR).

This sequence belongs to the HSF family. Class C subfamily. Homotrimer. Exhibits temperature-dependent phosphorylation.

The protein localises to the nucleus. Transcriptional regulator that specifically binds DNA of heat shock promoter elements (HSE). This is Heat stress transcription factor C-2b (HSFC2B) from Oryza sativa subsp. japonica (Rice).